Reading from the N-terminus, the 157-residue chain is Beta-defensin 125 (157 aa).

An N-terminal signal peptide occupies residues 1-20 (MNILMLTFIICGLLTQVTKG). Disulfide bonds link cysteine 27/cysteine 55, cysteine 35/cysteine 49, and cysteine 39/cysteine 56. Residues 109 to 157 (GETMTPETNTPETTMPPPETTTPETTMPPSETATSETMPPPSQRALTHN) are disordered. 2 stretches are compositionally biased toward low complexity: residues 110–121 (ETMTPETNTPET) and 129–145 (TTPE…TSET).

The protein belongs to the beta-defensin family.

The protein localises to the secreted. Has antibacterial activity. The protein is Beta-defensin 125 (DEFB125) of Pan troglodytes (Chimpanzee).